A 128-amino-acid polypeptide reads, in one-letter code: Arginine decarboxylase proenzyme (128 aa).

Ser76 (schiff-base intermediate with substrate; via pyruvic acid) is an active-site residue. Ser76 bears the Pyruvic acid (Ser); by autocatalysis mark. The active-site Proton acceptor; for processing activity is the His81. Catalysis depends on Cys96, which acts as the Proton donor; for catalytic activity.

This sequence belongs to the prokaryotic AdoMetDC family. Type 1 subfamily. As to quaternary structure, heterooctamer of four alpha and four beta chains arranged as a tetramer of alpha/beta heterodimers. Requires pyruvate as cofactor. Post-translationally, is synthesized initially as an inactive proenzyme. Formation of the active enzyme involves a self-maturation process in which the active site pyruvoyl group is generated from an internal serine residue via an autocatalytic post-translational modification. Two non-identical subunits are generated from the proenzyme in this reaction, and the pyruvate is formed at the N-terminus of the alpha chain, which is derived from the carboxyl end of the proenzyme. The post-translation cleavage follows an unusual pathway, termed non-hydrolytic serinolysis, in which the side chain hydroxyl group of the serine supplies its oxygen atom to form the C-terminus of the beta chain, while the remainder of the serine residue undergoes an oxidative deamination to produce ammonia and the pyruvoyl group blocking the N-terminus of the alpha chain.

It catalyses the reaction L-arginine + H(+) = agmatine + CO2. It functions in the pathway amine and polyamine biosynthesis; agmatine biosynthesis; agmatine from L-arginine: step 1/1. Specifically catalyzes the decarboxylation of L-arginine to agmatine. Has no S-adenosylmethionine decarboxylase (AdoMetDC) activity. The sequence is that of Arginine decarboxylase proenzyme from Metallosphaera sedula (strain ATCC 51363 / DSM 5348 / JCM 9185 / NBRC 15509 / TH2).